The sequence spans 180 residues: CASP-like protein 5A1 (180 aa).

The Cytoplasmic portion of the chain corresponds to 1-36 (MEVSHPAVHPVAVPPVLTEPPARVRMKDYQGMPGTL). The helical transmembrane segment at 37 to 57 (GGLALRLGQLGFAVLSFSIMV) threads the bilayer. Over 58–67 (STPDFSQVTA) the chain is Extracellular. The chain crosses the membrane as a helical span at residues 68–88 (FCYLVAATVLQTLWSSITAVV). Residues 89–102 (DIYALSVRRSLHHS) lie on the Cytoplasmic side of the membrane. The chain crosses the membrane as a helical span at residues 103–123 (LLVGLFAVGDGVTSTLTFAAA). Residues 124-150 (CATAGITVLIDNDLDECGQNHCGRFEA) are Extracellular-facing. The chain crosses the membrane as a helical span at residues 151–171 (AAAMAFLSWIMAAPSFLLAFW). Topologically, residues 172-180 (SFGNKIVCF) are cytoplasmic.

Belongs to the Casparian strip membrane proteins (CASP) family. Homodimer and heterodimers.

It localises to the cell membrane. The sequence is that of CASP-like protein 5A1 from Pteridium aquilinum subsp. aquilinum (Bracken fern).